The primary structure comprises 142 residues: ATP synthase epsilon chain (142 aa).

It belongs to the ATPase epsilon chain family. In terms of assembly, F-type ATPases have 2 components, CF(1) - the catalytic core - and CF(0) - the membrane proton channel. CF(1) has five subunits: alpha(3), beta(3), gamma(1), delta(1), epsilon(1). CF(0) has three main subunits: a, b and c.

It localises to the cell inner membrane. Its function is as follows. Produces ATP from ADP in the presence of a proton gradient across the membrane. The sequence is that of ATP synthase epsilon chain from Shewanella pealeana (strain ATCC 700345 / ANG-SQ1).